Reading from the N-terminus, the 313-residue chain is Ribosomal RNA small subunit methyltransferase H (313 aa).

S-adenosyl-L-methionine is bound by residues 36–38, Asp56, Phe80, Asp102, and Gln109; that span reads GGH.

Belongs to the methyltransferase superfamily. RsmH family.

It localises to the cytoplasm. The enzyme catalyses cytidine(1402) in 16S rRNA + S-adenosyl-L-methionine = N(4)-methylcytidine(1402) in 16S rRNA + S-adenosyl-L-homocysteine + H(+). Specifically methylates the N4 position of cytidine in position 1402 (C1402) of 16S rRNA. In Actinobacillus pleuropneumoniae serotype 3 (strain JL03), this protein is Ribosomal RNA small subunit methyltransferase H.